A 536-amino-acid polypeptide reads, in one-letter code: Multicopper oxidase terE (536 aa).

The disordered stretch occupies residues 1–21; sequence MHWHGLSQSTAPFSDGSPQAS. Plastocyanin-like domains lie at 1-67, 79-238, and 354-488; these read MHWH…VEEK, ERIL…LSYN, and TVQK…VWMM. Residues His-2, His-4, His-48, and His-50 each coordinate Cu cation. A Cu cation-binding site is contributed by His-397.

Belongs to the multicopper oxidase family.

The protein operates within secondary metabolite biosynthesis. Its function is as follows. Multicopper oxidase; part of the gene cluster that mediates the biosynthesis of terrein, a fungal metabolite with ecological, antimicrobial, antiproliferative, and antioxidative activities. The first step in the pathway is performed by the polyketide synthase terA that produces 4-hydroxy-6-methylpyranon (4-HMP), orsellinic acid (OA), and 2,3-dehydro-6-hydroxymellein (2,3-dehydro-6-HM) by condensing acetyl-CoA with two, three, or four malonyl-CoA units, respectively. 4-HMP and OA are not pathway intermediates, but are rather shunt or side products. 2,3-dehydro-6-HM is further converted to 6-hydroxymellein (6-HM) by the 6-hydroxymellein synthase terB. The monooxygenases terC and terD, the multicopper oxidase terE and the Kelch-like protein terF are then involved in the transformation of 6-HM to terrein. Even if they are co-regulated with the other terrein cluster genes, terH and terI seem to be dispensable for terrein production; whereas one or both of the 2 transporters terG and terJ are probably required for efficient secretion of metabolites. The protein is Multicopper oxidase terE of Aspergillus terreus (strain NIH 2624 / FGSC A1156).